The primary structure comprises 78 residues: WAP four-disulfide core domain protein 12 (78 aa).

An N-terminal signal peptide occupies residues 1–21 (MWPNSILVLTVLLISSTLVTG). In terms of domain architecture, WAP spans 25–72 (KGAEKGVCPPDNVRCIRGEDPQCHNDNDCKDQKICCYWHCGFKCVQPV). Intrachain disulfides connect C32/C60, C39/C64, C47/C59, and C53/C68.

The protein localises to the secreted. In terms of biological role, antibacterial protein. Putative acid-stable proteinase inhibitor. The protein is WAP four-disulfide core domain protein 12 of Rattus norvegicus (Rat).